We begin with the raw amino-acid sequence, 248 residues long: NADP-dependent 3-hydroxy acid dehydrogenase YdfG (248 aa).

NADP(+)-binding positions include 7–12, 32–33, 54–55, and Asn81; these read GATAGF, RR, and DV. Ser134 lines the substrate pocket. NADP(+) is bound by residues Tyr147, Lys151, and 177–185; that span reads PGLVGGTEF. Tyr147 serves as the catalytic Proton acceptor.

It belongs to the short-chain dehydrogenases/reductases (SDR) family. Homotetramer.

It carries out the reaction 3-hydroxypropanoate + NADP(+) = 3-oxopropanoate + NADPH + H(+). It catalyses the reaction L-allo-threonine + NADP(+) = aminoacetone + CO2 + NADPH. In terms of biological role, NADP-dependent dehydrogenase with broad substrate specificity acting on 3-hydroxy acids. Catalyzes the NADP-dependent oxidation of L-allo-threonine to L-2-amino-3-keto-butyrate, which is spontaneously decarboxylated into aminoacetone. Also acts on D-threonine, L-serine, D-serine, D-3-hydroxyisobutyrate, L-3-hydroxyisobutyrate, D-glycerate and L-glycerate. Able to catalyze the reduction of the malonic semialdehyde to 3-hydroxypropionic acid. YdfG is apparently supplementing RutE, the presumed malonic semialdehyde reductase involved in pyrimidine degradation since both are able to detoxify malonic semialdehyde. This chain is NADP-dependent 3-hydroxy acid dehydrogenase YdfG, found in Salmonella typhi.